The primary structure comprises 77 residues: Conotoxin Cl6.15 (77 aa).

The signal sequence occupies residues 1–19; that stretch reads MKLSVKFLLFLMILPLIAG. A propeptide spanning residues 20-37 is cleaved from the precursor; the sequence is EDMSDNDAPKSVDVQRNV. Intrachain disulfides connect Cys49/Cys61, Cys55/Cys66, and Cys60/Cys75.

This sequence belongs to the conotoxin I1 superfamily. As to expression, expressed by the venom duct.

It is found in the secreted. The sequence is that of Conotoxin Cl6.15 from Californiconus californicus (California cone).